Consider the following 525-residue polypeptide: Probable feruloyl esterase B-1 (525 aa).

Positions 1–20 (MMRWFLLIGLASAAATDSSA) are cleaved as a signal peptide. 6 disulfide bridges follow: C26-C75, C61-C114, C187-C442, C256-C273, C282-C292, and C502-C524. N-linked (GlcNAc...) asparagine glycans are attached at residues N51, N80, and N98. The active-site Acyl-ester intermediate is S188. Ca(2+) contacts are provided by D257, D260, A262, and D264. Residues N283, N288, and N351 are each glycosylated (N-linked (GlcNAc...) asparagine). Active-site charge relay system residues include D401 and H441.

This sequence belongs to the tannase family.

It is found in the secreted. It catalyses the reaction feruloyl-polysaccharide + H2O = ferulate + polysaccharide.. In terms of biological role, involved in degradation of plant cell walls. Hydrolyzes the feruloyl-arabinose ester bond in arabinoxylans as well as the feruloyl-galactose and feruloyl-arabinose ester bonds in pectin. In Neosartorya fischeri (strain ATCC 1020 / DSM 3700 / CBS 544.65 / FGSC A1164 / JCM 1740 / NRRL 181 / WB 181) (Aspergillus fischerianus), this protein is Probable feruloyl esterase B-1 (faeB-1).